Reading from the N-terminus, the 190-residue chain is MLAHLRPALVLLLVLTGLTGFAYPLLSTAIAQAAFPHQAHGSLVRKDGRVVGSTLLGQPFDDPRYFWGRPSATSPVPYAGQASAGSNLGPTNPALAEAVKARVDALRAADPEGAAPVPVDLVTASGSGLDPHISPAGAEHQVRRVARARGLSEAEVRRFVARHTEGRLLGLLGEPHVNVLLLNLALDGAR.

A helical membrane pass occupies residues 10 to 30 (VLLLVLTGLTGFAYPLLSTAI).

Belongs to the KdpC family. As to quaternary structure, the system is composed of three essential subunits: KdpA, KdpB and KdpC.

The protein resides in the cell inner membrane. In terms of biological role, part of the high-affinity ATP-driven potassium transport (or Kdp) system, which catalyzes the hydrolysis of ATP coupled with the electrogenic transport of potassium into the cytoplasm. This subunit acts as a catalytic chaperone that increases the ATP-binding affinity of the ATP-hydrolyzing subunit KdpB by the formation of a transient KdpB/KdpC/ATP ternary complex. The polypeptide is Potassium-transporting ATPase KdpC subunit (Sorangium cellulosum (strain So ce56) (Polyangium cellulosum (strain So ce56))).